The primary structure comprises 87 residues: Small ribosomal subunit protein uS15 (87 aa).

Belongs to the universal ribosomal protein uS15 family. In terms of assembly, part of the 30S ribosomal subunit. Forms a bridge to the 50S subunit in the 70S ribosome, contacting the 23S rRNA.

One of the primary rRNA binding proteins, it binds directly to 16S rRNA where it helps nucleate assembly of the platform of the 30S subunit by binding and bridging several RNA helices of the 16S rRNA. Its function is as follows. Forms an intersubunit bridge (bridge B4) with the 23S rRNA of the 50S subunit in the ribosome. The chain is Small ribosomal subunit protein uS15 from Clostridium kluyveri (strain NBRC 12016).